We begin with the raw amino-acid sequence, 221 residues long: Ribonuclease 3 (221 aa).

The RNase III domain occupies 4-121 (LEQLEKKLGY…LWAAVYIDSG (118 aa)). E40 lines the Mg(2+) pocket. The active site involves D44. Residues D107 and E110 each coordinate Mg(2+). Residue E110 is part of the active site. In terms of domain architecture, DRBM spans 151–219 (DYKTILQEIT…AEELIKLLEE (69 aa)).

This sequence belongs to the ribonuclease III family. As to quaternary structure, homodimer. The cofactor is Mg(2+).

It is found in the cytoplasm. The catalysed reaction is Endonucleolytic cleavage to 5'-phosphomonoester.. Its function is as follows. Digests double-stranded RNA. Involved in the processing of primary rRNA transcript to yield the immediate precursors to the large and small rRNAs (23S and 16S). Also processes some mRNAs, and tRNAs when they are encoded in the rRNA operon. Probably processes pre-crRNA and tracrRNA of type II CRISPR loci if present in the organism. In Aquifex aeolicus (strain VF5), this protein is Ribonuclease 3 (rnc).